The sequence spans 617 residues: Probable Xaa-Pro aminopeptidase P (617 aa).

Mn(2+) contacts are provided by aspartate 414, aspartate 425, glutamate 523, and glutamate 537.

This sequence belongs to the peptidase M24B family. Mn(2+) is required as a cofactor.

The enzyme catalyses Release of any N-terminal amino acid, including proline, that is linked to proline, even from a dipeptide or tripeptide.. Its function is as follows. Catalyzes the removal of a penultimate prolyl residue from the N-termini of peptides. The chain is Probable Xaa-Pro aminopeptidase P (AMPP) from Colletotrichum graminicola (strain M1.001 / M2 / FGSC 10212) (Maize anthracnose fungus).